The following is a 327-amino-acid chain: Aliphatic sulfonates import ATP-binding protein SsuB (327 aa).

The tract at residues 21–54 is disordered; sequence ELAQPRIADGDAQDAAVYERDGGAHAPPDGDRAD. Over residues 37 to 54 the composition is skewed to basic and acidic residues; that stretch reads VYERDGGAHAPPDGDRAD. In terms of domain architecture, ABC transporter spans 66–285; it reads VRLTRVSKRY…ARASAAFAAL (220 aa). An ATP-binding site is contributed by 98 to 105; it reads GRSGCGKS. The disordered stretch occupies residues 300-327; sequence APAAPNAAGPEGASRGRAAPASGLRWAV.

This sequence belongs to the ABC transporter superfamily. Aliphatic sulfonates importer (TC 3.A.1.17.2) family. In terms of assembly, the complex is composed of two ATP-binding proteins (SsuB), two transmembrane proteins (SsuC) and a solute-binding protein (SsuA).

Its subcellular location is the cell inner membrane. The catalysed reaction is ATP + H2O + aliphatic sulfonate-[sulfonate-binding protein]Side 1 = ADP + phosphate + aliphatic sulfonateSide 2 + [sulfonate-binding protein]Side 1.. Functionally, part of the ABC transporter complex SsuABC involved in aliphatic sulfonates import. Responsible for energy coupling to the transport system. This is Aliphatic sulfonates import ATP-binding protein SsuB from Burkholderia pseudomallei (strain K96243).